The following is a 159-amino-acid chain: Type-1 angiotensin II receptor-associated protein (159 aa).

The Extracellular portion of the chain corresponds to 1 to 23 (MELPAVNLKVILLGHWLLTTWGC). A helical membrane pass occupies residues 24–44 (IVFSGSYAWANFTILALGVWA). Residues 45–55 (VAQRDSIDAIS) are Cytoplasmic-facing. The chain crosses the membrane as a helical span at residues 56–76 (MFLGGLLATIFLDIVHISIFY). Residues 77 to 86 (PRVSLTDTGR) are Extracellular-facing. Residues 87 to 107 (FGVGMAILSLLLKPLSCCFVY) traverse the membrane as a helical segment. Residues 108–159 (HMYRERGGELLVHTGFLGSSQDRSAYQTIDSAEAPADPFAVPEGRSQDARGY) are Cytoplasmic-facing. The segment at 110 to 122 (YRERGGELLVHTG) is interaction with AGTR1. A phosphoserine mark is found at serine 126 and serine 127. Threonine 135 carries the post-translational modification Phosphothreonine. Phosphoserine occurs at positions 138 and 153. The disordered stretch occupies residues 140–159 (EAPADPFAVPEGRSQDARGY).

As to quaternary structure, interacts with RACK1, and with the C-terminal region of AGTR1. Ubiquitous but more abundant in kidney, heart, pancreas and thyroid.

It is found in the endoplasmic reticulum membrane. Its subcellular location is the golgi apparatus membrane. It localises to the cytoplasmic vesicle membrane. Appears to be a negative regulator of type-1 angiotensin II receptor-mediated signaling by regulating receptor internalization as well as mechanism of receptor desensitization such as phosphorylation. Also induces a decrease in cell proliferation and angiotensin II-stimulated transcriptional activity. This is Type-1 angiotensin II receptor-associated protein (AGTRAP) from Homo sapiens (Human).